A 392-amino-acid polypeptide reads, in one-letter code: tRNA (guanine-N(7)-)-methyltransferase (392 aa).

Glu123, Glu148, and Asp175 together coordinate S-adenosyl-L-methionine. Substrate is bound by residues Lys201 and Asp231.

This sequence belongs to the class I-like SAM-binding methyltransferase superfamily. TrmB family.

The catalysed reaction is guanosine(46) in tRNA + S-adenosyl-L-methionine = N(7)-methylguanosine(46) in tRNA + S-adenosyl-L-homocysteine. Its pathway is tRNA modification; N(7)-methylguanine-tRNA biosynthesis. Catalyzes the formation of N(7)-methylguanine at position 46 (m7G46) in tRNA. The sequence is that of tRNA (guanine-N(7)-)-methyltransferase from Campylobacter jejuni (strain RM1221).